The primary structure comprises 312 residues: Taste receptor type 2 member 9 (312 aa).

The Extracellular portion of the chain corresponds to 1–9 (MPSAIEAIY). Residues 10–32 (IILIAGELTIGIWGNGFIVLVNC) form a helical membrane-spanning segment. Over 33–52 (XDWLKRRDISLIDIILISLA) the chain is Cytoplasmic. A helical transmembrane segment spans residues 53-72 (ISRICLLCVISLDGFFMLLF). Residues 73–86 (PGTYGNSVLVSIVN) are Extracellular-facing. The helical transmembrane segment at 87-109 (VVWTFANNSSLWFTSCLSIFYLL) threads the bilayer. Residues 110–128 (KIANISHPFFFWLKLKINK) lie on the Cytoplasmic side of the membrane. The chain crosses the membrane as a helical span at residues 129-146 (VMLAILLGSFLISLIISV). Topologically, residues 147–180 (XKNDDMWYHLFKVSXEENITWEFKVSKIPGTFKQ) are extracellular. N164 carries N-linked (GlcNAc...) asparagine glycosylation. The chain crosses the membrane as a helical span at residues 181 to 203 (LTLNLGGRVPFILCLISFFLLLF). The Cytoplasmic segment spans residues 204–234 (SLVRHTKQIQLHATGFRDPSTEAHMRAIKAV). Residues 235–257 (IIFLLLLIVYYPVFLVMTSSALI) form a helical membrane-spanning segment. Residues 258-261 (PQGK) are Extracellular-facing. Residues 262 to 284 (LVLMIGDIVTVIFPSSHSFILIM) traverse the membrane as a helical segment. At 285-312 (GNSKLREAFLKMLRFVKGFLRRRKPFVP) the chain is on the cytoplasmic side.

Belongs to the G-protein coupled receptor T2R family.

It is found in the membrane. Its function is as follows. Gustducin-coupled receptor implicated in the perception of bitter compounds in the oral cavity and the gastrointestinal tract. Signals through PLCB2 and the calcium-regulated cation channel TRPM5. The protein is Taste receptor type 2 member 9 (TAS2R9) of Pan troglodytes (Chimpanzee).